The primary structure comprises 391 residues: ATP phosphoribosyltransferase regulatory subunit (391 aa).

The protein belongs to the class-II aminoacyl-tRNA synthetase family. HisZ subfamily. In terms of assembly, heteromultimer composed of HisG and HisZ subunits.

The protein resides in the cytoplasm. Its pathway is amino-acid biosynthesis; L-histidine biosynthesis; L-histidine from 5-phospho-alpha-D-ribose 1-diphosphate: step 1/9. Functionally, required for the first step of histidine biosynthesis. May allow the feedback regulation of ATP phosphoribosyltransferase activity by histidine. In Bacillus pumilus (strain SAFR-032), this protein is ATP phosphoribosyltransferase regulatory subunit.